A 295-amino-acid polypeptide reads, in one-letter code: 4-hydroxy-tetrahydrodipicolinate synthase (295 aa).

Pyruvate is bound at residue threonine 46. Tyrosine 134 (proton donor/acceptor) is an active-site residue. Lysine 162 acts as the Schiff-base intermediate with substrate in catalysis. Isoleucine 205 is a binding site for pyruvate.

It belongs to the DapA family. As to quaternary structure, homotetramer; dimer of dimers.

Its subcellular location is the cytoplasm. The catalysed reaction is L-aspartate 4-semialdehyde + pyruvate = (2S,4S)-4-hydroxy-2,3,4,5-tetrahydrodipicolinate + H2O + H(+). It participates in amino-acid biosynthesis; L-lysine biosynthesis via DAP pathway; (S)-tetrahydrodipicolinate from L-aspartate: step 3/4. Functionally, catalyzes the condensation of (S)-aspartate-beta-semialdehyde [(S)-ASA] and pyruvate to 4-hydroxy-tetrahydrodipicolinate (HTPA). This chain is 4-hydroxy-tetrahydrodipicolinate synthase, found in Anaeromyxobacter sp. (strain K).